Consider the following 307-residue polypeptide: Inner spore coat protein H-like protein (307 aa).

This sequence belongs to the CotH family.

It localises to the spore coat. In terms of biological role, involved in the assembly of several proteins in the inner and outer layer of the spore coat. The chain is Inner spore coat protein H-like protein (yisJ) from Bacillus subtilis (strain 168).